We begin with the raw amino-acid sequence, 1210 residues long: Epidermal growth factor receptor (1210 aa).

The first 24 residues, 1–24 (MRPSGTAGAALLALLAALCPASRA), serve as a signal peptide directing secretion. Residues 25–645 (LEEKKVCQGT…CARNGPKIPS (621 aa)) are Extracellular-facing. An intrachain disulfide couples C31 to C58. One copy of the Approximate repeat lies at 75-300 (DLSFLKTIQE…CVKKCPRNYV (226 aa)). Residues N128, N175, and N196 are each glycosylated (N-linked (GlcNAc...) asparagine). Disulfide bonds link C157-C187, C190-C199, C194-C207, C215-C223, C219-C231, C232-C240, C236-C248, C251-C260, C264-C291, C295-C307, C311-C326, C329-C333, and C337-C362. S229 bears the Phosphoserine mark. N-linked (GlcNAc...) asparagine glycans are attached at residues N352, N361, N413, and N444. The Approximate repeat unit spans residues 390–600 (QELDILKTVK…CVKTCPAGVM (211 aa)). 11 disulfide bridges follow: C470-C499, C506-C515, C510-C523, C526-C535, C539-C555, C558-C571, C562-C579, C582-C591, C595-C617, C620-C628, and C624-C636. N-linked (GlcNAc...) asparagine glycosylation is present at N528. N568 is a glycosylation site (N-linked (GlcNAc...) asparagine). N-linked (GlcNAc...) asparagine glycosylation occurs at N603. Residues 646–668 (IATGMVGALLLLLVVALGIGLFM) traverse the membrane as a helical segment. Over 669 to 1210 (RRRHIVRKRT…APQSSEFIGA (542 aa)) the chain is Cytoplasmic. A Phosphothreonine; by PKC and PKD/PRKD1 modification is found at T678. The important for dimerization, phosphorylation and activation stretch occupies residues 688 to 704 (LVEPLTPSGEAPNQALL). Residue T693 is modified to Phosphothreonine; by PKD/PRKD1. The residue at position 695 (S695) is a Phosphoserine. Residues 712–979 (FKKIKVLGSG…KMARDPQRYL (268 aa)) enclose the Protein kinase domain. A Glycyl lysine isopeptide (Lys-Gly) (interchain with G-Cter in ubiquitin) cross-link involves residue K716. 718-726 (LGSGAFGTV) serves as a coordination point for ATP. K737 is covalently cross-linked (Glycyl lysine isopeptide (Lys-Gly) (interchain with G-Cter in ubiquitin)). Residue K745 participates in ATP binding. N6-(2-hydroxyisobutyryl)lysine is present on K745. Residues K754 and K757 each participate in a glycyl lysine isopeptide (Lys-Gly) (interchain with G-Cter in ubiquitin) cross-link. 790–791 (TQ) serves as a coordination point for ATP. D837 functions as the Proton acceptor in the catalytic mechanism. Position 855 (D855) interacts with ATP. Residue K867 forms a Glycyl lysine isopeptide (Lys-Gly) (interchain with G-Cter in ubiquitin) linkage. Phosphotyrosine is present on Y869. Glycyl lysine isopeptide (Lys-Gly) (interchain with G-Cter in ubiquitin) cross-links involve residues K929, K960, and K970. Phosphoserine occurs at positions 991 and 995. A phosphotyrosine; by autocatalysis mark is found at Y998 and Y1016. A phosphoserine mark is found at S1026 and S1039. T1041 carries the post-translational modification Phosphothreonine. S1042 carries the post-translational modification Phosphoserine. C1049 carries S-palmitoyl cysteine lipidation. Phosphoserine is present on S1064. A Phosphotyrosine modification is found at Y1069. Residues S1070, S1071, and S1081 each carry the phosphoserine modification. Y1092 and Y1110 each carry phosphotyrosine; by autocatalysis. The interval 1097 to 1137 (VPKRPAGSVQNPVYHNQPLNPAPSRDPHYQDPHSTAVGNPE) is disordered. Composition is skewed to polar residues over residues 1104 to 1115 (SVQNPVYHNQPL) and 1128 to 1137 (PHSTAVGNPE). Residue C1146 is the site of S-palmitoyl cysteine attachment. S1166 is modified (phosphoserine). A phosphotyrosine; by autocatalysis mark is found at Y1172 and Y1197. The residue at position 1199 (R1199) is an Omega-N-methylarginine.

It belongs to the protein kinase superfamily. Tyr protein kinase family. EGF receptor subfamily. In terms of assembly, binding of the ligand triggers homo- and/or heterodimerization of the receptor triggering its autophosphorylation. Heterodimer with ERBB2. Forms a complex with CCDC88A/GIV (via SH2-like regions) and GNAI3 which leads to enhanced EGFR signaling and triggering of cell migration; binding to CCDC88A requires autophosphorylation of the EGFR C-terminal region, and ligand stimulation is required for recruitment of GNAI3 to the complex. Interacts with ERRFI1; inhibits dimerization of the kinase domain and autophosphorylation. Part of a complex with ERBB2 and either PIK3C2A or PIK3C2B. Interacts with GRB2; an adapter protein coupling the receptor to downstream signaling pathways. Interacts with GAB2; involved in signaling downstream of EGFR. Interacts with STAT3; mediates EGFR downstream signaling in cell proliferation. Interacts with RIPK1; involved in NF-kappa-B activation. Interacts (autophosphorylated) with CBL, CBLB and CBLC; involved in EGFR ubiquitination and regulation; interaction with CBL is reduced in the presence of tensin TNS4. Interacts with SOCS5; regulates EGFR degradation through ELOC- and ELOB-mediated ubiquitination and proteasomal degradation. Interacts with PRMT5; methylates EGFR and enhances interaction with PTPN6. Interacts (phosphorylated) with PTPN6; inhibits EGFR-dependent activation of MAPK/ERK. Interacts with COPG1; essential for regulation of EGF-dependent nuclear transport of EGFR by retrograde trafficking from the Golgi to the ER. Interacts with TNK2; this interaction is dependent on EGF stimulation and kinase activity of EGFR. Interacts with PCNA; positively regulates PCNA. Interacts with PELP1. Interacts with MUC1. Interacts with AP2M1. Interacts with FER. May interact with EPS8; mediates EPS8 phosphorylation. Interacts (via SH2 domains) with GRB2, NCK1 and NCK2. Interacts with ATXN2. Interacts with GAREM1. Interacts (ubiquitinated) with ANKRD13A/B/D; the interaction is direct and may regulate EGFR internalization after EGF stimulation. Interacts with GPER1; the interaction occurs in an estrogen-dependent manner. Interacts (via C-terminal cytoplasmic kinase domain) with ZPR1 (via zinc fingers). Interacts with RNF115 and RNF126. Interacts with GPRC5A (via its transmembrane domain). Interacts with FAM83B; positively regulates EGFR inducing its autophosphorylation in absence of stimulation by EGF. Interacts with LAPTM4B; positively correlates with EGFR activation. Interacts with STX19. Interacts with CD44. Interacts with PGRMC1; the interaction requires PGRMC1 homodimerization. Interacts with PIKFYVE. Interacts with NEU3. Interacts with TRAF4. Interacts with the ant venom OMEGA-myrmeciitoxin(02)-Mg1a. Interacts with CD82; this interaction facilitates ligand-induced endocytosis of the receptor and its subsequent desensitization. Phosphorylated on Tyr residues in response to EGF. Phosphorylation at Ser-695 is partial and occurs only if Thr-693 is phosphorylated. Phosphorylation at Thr-678 and Thr-693 by PRKD1 inhibits EGF-induced MAPK8/JNK1 activation. Dephosphorylation by PTPRJ prevents endocytosis and stabilizes the receptor at the plasma membrane. Autophosphorylation at Tyr-1197 is stimulated by methylation at Arg-1199 and enhances interaction with PTPN6. Autophosphorylation at Tyr-1092 and/or Tyr-1110 recruits STAT3. Dephosphorylated by PTPN1 and PTPN2. In terms of processing, monoubiquitinated and polyubiquitinated upon EGF stimulation; which does not affect tyrosine kinase activity or signaling capacity but may play a role in lysosomal targeting. Polyubiquitin linkage is mainly through 'Lys-63', but linkage through 'Lys-48', 'Lys-11' and 'Lys-29' also occurs. Deubiquitination by OTUD7B prevents degradation. Ubiquitinated by RNF115 and RNF126. Ubiquitinated by ZNRF1 or CBL at different lysines in response to EGF stimulation; leading to recruitment of the ESCRT machinery and subsequent degradation in the lysosomes. Deubiquitinated by UCHL1 leading to the inhibition of its degradation. Post-translationally, palmitoylated on Cys residues by ZDHHC20. Palmitoylation inhibits internalization after ligand binding, and increases the persistence of tyrosine-phosphorylated EGFR at the cell membrane. Palmitoylation increases the amplitude and duration of EGFR signaling. Methylated. Methylation at Arg-1199 by PRMT5 stimulates phosphorylation at Tyr-1197. As to expression, hypothalamus.

The protein localises to the cell membrane. The protein resides in the endoplasmic reticulum membrane. Its subcellular location is the golgi apparatus membrane. It localises to the nucleus membrane. It is found in the endosome. The protein localises to the endosome membrane. The protein resides in the nucleus. It catalyses the reaction L-tyrosyl-[protein] + ATP = O-phospho-L-tyrosyl-[protein] + ADP + H(+). Its activity is regulated as follows. Endocytosis and inhibition of the activated EGFR by phosphatases like PTPRJ and PTPRK constitute immediate regulatory mechanisms. Upon EGF-binding phosphorylates EPS15 that regulates EGFR endocytosis and activity. Moreover, inducible feedback inhibitors including LRIG1, SOCS4, SOCS5 and ERRFI1 constitute alternative regulatory mechanisms for the EGFR signaling. Its function is as follows. Receptor tyrosine kinase binding ligands of the EGF family and activating several signaling cascades to convert extracellular cues into appropriate cellular responses. Known ligands include EGF, TGFA/TGF-alpha, AREG, epigen/EPGN, BTC/betacellulin, epiregulin/EREG and HBEGF/heparin-binding EGF. Ligand binding triggers receptor homo- and/or heterodimerization and autophosphorylation on key cytoplasmic residues. The phosphorylated receptor recruits adapter proteins like GRB2 which in turn activates complex downstream signaling cascades. Activates at least 4 major downstream signaling cascades including the RAS-RAF-MEK-ERK, PI3 kinase-AKT, PLCgamma-PKC and STATs modules. May also activate the NF-kappa-B signaling cascade. Also directly phosphorylates other proteins like RGS16, activating its GTPase activity and probably coupling the EGF receptor signaling to the G protein-coupled receptor signaling. Also phosphorylates MUC1 and increases its interaction with SRC and CTNNB1/beta-catenin. Positively regulates cell migration via interaction with CCDC88A/GIV which retains EGFR at the cell membrane following ligand stimulation, promoting EGFR signaling which triggers cell migration. Plays a role in enhancing learning and memory performance. Plays a role in mammalian pain signaling (long-lasting hypersensitivity). This chain is Epidermal growth factor receptor (EGFR), found in Macaca mulatta (Rhesus macaque).